The chain runs to 204 residues: Urease accessory protein UreG (204 aa).

A GTP-binding site is contributed by 11-18 (GPVGAGKT).

This sequence belongs to the SIMIBI class G3E GTPase family. UreG subfamily. In terms of assembly, homodimer. UreD, UreF and UreG form a complex that acts as a GTP-hydrolysis-dependent molecular chaperone, activating the urease apoprotein by helping to assemble the nickel containing metallocenter of UreC. The UreE protein probably delivers the nickel.

Its subcellular location is the cytoplasm. Functionally, facilitates the functional incorporation of the urease nickel metallocenter. This process requires GTP hydrolysis, probably effectuated by UreG. The sequence is that of Urease accessory protein UreG from Staphylococcus epidermidis (strain ATCC 35984 / DSM 28319 / BCRC 17069 / CCUG 31568 / BM 3577 / RP62A).